A 358-amino-acid chain; its full sequence is Holliday junction branch migration complex subunit RuvB (358 aa).

A large ATPase domain (RuvB-L) region spans residues 1–183 (MAEPSLVSGG…FGFTGHLEFY (183 aa)). ATP-binding positions include Leu22, Arg23, Gly64, Lys67, Thr68, Thr69, 130-132 (EDF), Arg173, Tyr183, and Arg220. Thr68 provides a ligand contact to Mg(2+). The interval 184–254 (SVAELELVLR…SASAALDMYE (71 aa)) is small ATPAse domain (RuvB-S). Positions 257 to 358 (ERGLDRLDRS…NHAESVDTVG (102 aa)) are head domain (RuvB-H). Positions 312 and 317 each coordinate DNA.

Belongs to the RuvB family. Homohexamer. Forms an RuvA(8)-RuvB(12)-Holliday junction (HJ) complex. HJ DNA is sandwiched between 2 RuvA tetramers; dsDNA enters through RuvA and exits via RuvB. An RuvB hexamer assembles on each DNA strand where it exits the tetramer. Each RuvB hexamer is contacted by two RuvA subunits (via domain III) on 2 adjacent RuvB subunits; this complex drives branch migration. In the full resolvosome a probable DNA-RuvA(4)-RuvB(12)-RuvC(2) complex forms which resolves the HJ.

It is found in the cytoplasm. The enzyme catalyses ATP + H2O = ADP + phosphate + H(+). Its function is as follows. The RuvA-RuvB-RuvC complex processes Holliday junction (HJ) DNA during genetic recombination and DNA repair, while the RuvA-RuvB complex plays an important role in the rescue of blocked DNA replication forks via replication fork reversal (RFR). RuvA specifically binds to HJ cruciform DNA, conferring on it an open structure. The RuvB hexamer acts as an ATP-dependent pump, pulling dsDNA into and through the RuvAB complex. RuvB forms 2 homohexamers on either side of HJ DNA bound by 1 or 2 RuvA tetramers; 4 subunits per hexamer contact DNA at a time. Coordinated motions by a converter formed by DNA-disengaged RuvB subunits stimulates ATP hydrolysis and nucleotide exchange. Immobilization of the converter enables RuvB to convert the ATP-contained energy into a lever motion, pulling 2 nucleotides of DNA out of the RuvA tetramer per ATP hydrolyzed, thus driving DNA branch migration. The RuvB motors rotate together with the DNA substrate, which together with the progressing nucleotide cycle form the mechanistic basis for DNA recombination by continuous HJ branch migration. Branch migration allows RuvC to scan DNA until it finds its consensus sequence, where it cleaves and resolves cruciform DNA. This is Holliday junction branch migration complex subunit RuvB from Paenarthrobacter aurescens (strain TC1).